A 221-amino-acid chain; its full sequence is MSYGRPPPDVEGMTSLKVDNLTYRTSPDTLRRVFEKYGRVGDVYIPRDRYTKESRGFAFVRFHDKRDAEDAMDAMDGAVLDGRELRVQMARYGRPPDSHHSRRGPPPRRYGSSGYGRRSRSPRRRRRSRSRSRSRSRSRSRSRYSRSKSRSRTRSRSRSTSKSRSARRSKSKSSSVSRSRSRSRSRSRSRSPPPTSKRESNSRSRSKSPPKSPEEEGAVSS.

The RRM domain maps to 14–92 (TSLKVDNLTY…RELRVQMARY (79 aa)). Residues 91–221 (RYGRPPDSHH…SPEEEGAVSS (131 aa)) form a disordered region. 2 stretches are compositionally biased toward basic residues: residues 117 to 171 (RRSR…RSKS) and 179 to 189 (SRSRSRSRSRS).

It belongs to the splicing factor SR family. In terms of processing, extensively phosphorylated on serine residues in the RS domain.

Its subcellular location is the nucleus. Its function is as follows. Necessary for the splicing of pre-mRNA. It is required for formation of the earliest ATP-dependent splicing complex and interacts with spliceosomal components bound to both the 5'- and 3'-splice sites during spliceosome assembly. It also is required for ATP-dependent interactions of both U1 and U2 snRNPs with pre-mRNA. The chain is Serine/arginine-rich splicing factor 2 (SRSF2) from Gallus gallus (Chicken).